We begin with the raw amino-acid sequence, 225 residues long: Peroxiredoxin-2E-2, chloroplastic (225 aa).

The transit peptide at 1 to 42 (MAAPTAAALSTLSTASVTSGKRFITSSFSLSFSSRPLATGVR) directs the protein to the chloroplast. In terms of domain architecture, Thioredoxin spans 63 to 225 (IAVGDKLPDA…SSAEEMLKAL (163 aa)). Residue Cys111 is the Cysteine sulfenic acid (-SOH) intermediate of the active site.

The protein belongs to the peroxiredoxin family. Prx5 subfamily. Monomer.

The protein resides in the plastid. It is found in the chloroplast stroma. The enzyme catalyses [glutaredoxin]-dithiol + a hydroperoxide = [glutaredoxin]-disulfide + an alcohol + H2O. Thiol-specific peroxidase that catalyzes the reduction of hydrogen peroxide and organic hydroperoxides to water and alcohols, respectively. Plays a role in cell protection against oxidative stress by detoxifying peroxides. May be involved in chloroplast redox homeostasis. The sequence is that of Peroxiredoxin-2E-2, chloroplastic (PRXIIE-2) from Oryza sativa subsp. japonica (Rice).